We begin with the raw amino-acid sequence, 284 residues long: MPRYAQLVMGPAGSGKSTYCSTMVQHCEALNRSVQVVNLDPAAEHFNYPVMADIRELIEVDDVMEDESLRFGPNGGLVFCMEYFANNFDWLENCLGHVEDDYILFDCPGQIELYTHLPVMKQLVQQLEQWEFRVCGVFLVDSQFMVESFKFISGILAALSAMVSLEIPQVNIMTKMDLLSKKAKKEIEKFLDPDMYSLIDDSTGDLRSQKFKKLTKAVCGLVDDYSMVRFLPYDQSDEESMNIVLQHIDFAIQYGEDLEFKEPREHEEESSSMFDEYFQERQNE.

13-18 contributes to the GTP binding site; sequence GSGKST. Residues 72–74 carry the Gly-Pro-Asn (GPN)-loop; involved in dimer interface motif; sequence GPN. 174–177 lines the GTP pocket; sequence TKMD. The interval 262-284 is disordered; that stretch reads EPREHEEESSSMFDEYFQERQNE.

It belongs to the GPN-loop GTPase family. As to quaternary structure, heterodimer with GPN1. Binds to RNA polymerase II (RNAPII). Interacts directly with subunits RPB4 and RPB7 and the CTD of RPB1.

In terms of biological role, small GTPase required for proper localization of RNA polymerase II (RNAPII). May act at an RNAP assembly step prior to nuclear import. The protein is GPN-loop GTPase 3 of Mus musculus (Mouse).